Reading from the N-terminus, the 352-residue chain is S-adenosylmethionine:tRNA ribosyltransferase-isomerase (352 aa).

The protein belongs to the QueA family. As to quaternary structure, monomer.

Its subcellular location is the cytoplasm. The catalysed reaction is 7-aminomethyl-7-carbaguanosine(34) in tRNA + S-adenosyl-L-methionine = epoxyqueuosine(34) in tRNA + adenine + L-methionine + 2 H(+). It functions in the pathway tRNA modification; tRNA-queuosine biosynthesis. Transfers and isomerizes the ribose moiety from AdoMet to the 7-aminomethyl group of 7-deazaguanine (preQ1-tRNA) to give epoxyqueuosine (oQ-tRNA). The protein is S-adenosylmethionine:tRNA ribosyltransferase-isomerase of Syntrophomonas wolfei subsp. wolfei (strain DSM 2245B / Goettingen).